A 653-amino-acid chain; its full sequence is Endoglin (653 aa).

The first 26 residues, 1 to 26 (MDRGVLPLPITLLFVIYSFVPTTGLA), serve as a signal peptide directing secretion. Residues 27–47 (ERVGCDLQPVDPTRGEVTFTT) form an OR1, N-terminal part region. The required for interaction with GDF2 stretch occupies residues 27 to 337 (ERVGCDLQPV…SSCGGVFQTT (311 aa)). Residues 27 to 581 (ERVGCDLQPV…IVSPDLSGKG (555 aa)) are Extracellular-facing. Disulfide bonds link cysteine 31–cysteine 209, cysteine 54–cysteine 184, cysteine 244–cysteine 330, cysteine 350–cysteine 382, cysteine 363–cysteine 442, cysteine 394–cysteine 412, and cysteine 493–cysteine 549. The OR2 stretch occupies residues 48–201 (SQVSEGCVAQ…MGATLEWQPR (154 aa)). Asparagine 89, asparagine 135, and asparagine 266 each carry an N-linked (GlcNAc...) asparagine glycan. The segment at 202-330 (AQTPVQSCRL…SNVSLRASSC (129 aa)) is OR1, C-terminal part. The essential for interaction with GDF2 stretch occupies residues 270–282 (QILTTGEYSVKIF). Asparagine 307 and asparagine 322 each carry an N-linked (GlcNAc...) asparagine glycan. Residues 363–510 (CGNQVMTLAL…GDMVELIQSR (148 aa)) enclose the ZP domain. Residues 582–606 (LVLPSVLGITFGAFLIGALLTAALW) form a helical membrane-spanning segment. At 607–653 (YIYSHTRGPSKREPVVAVAAPASSESSSTNHSIGSTQSTPCSTSSMA) the chain is on the cytoplasmic side. Residues 624–634 (VAAPASSESSS) show a composition bias toward low complexity. The interval 624 to 653 (VAAPASSESSSTNHSIGSTQSTPCSTSSMA) is disordered. Residues 635 to 653 (TNHSIGSTQSTPCSTSSMA) are compositionally biased toward polar residues. Phosphoserine; by TGFBR1 is present on residues serine 641 and serine 644.

In terms of assembly, homodimer; disulfide-linked. Forms a heteromeric complex with the signaling receptors for transforming growth factor-beta: TGFBR1 and/or TGFBR2. Interacts with TGFB1. It is able to bind TGFB1 and TGFB2 with high affinity, but not TGFB3. Interacts with GDF2, forming a heterotetramer with a 2:2 stoichiometry. Interacts with ACVRL1. Can form a heteromeric complex with GDF2 and ACVRL1. Interacts with BMP10. Interacts with DYNLT4. Interacts with ARRB2. As to expression, detected on blood vessels (at protein level). Detected on adult pulmonary artery, capillaries supporting the heart muscle and lung alveolar capillary endothelial cells. Endoglin is restricted to endothelial cells in all tissues except bone marrow and is also found in stromal cells within the connective tissue of intestine, stomach, heart, skeletal muscle, uterus, ovary, oviduct, testis and thymus.

Its subcellular location is the cell membrane. In terms of biological role, vascular endothelium glycoprotein that plays an important role in the regulation of angiogenesis. Required for normal structure and integrity of adult vasculature. Regulates the migration of vascular endothelial cells. Required for normal extraembryonic angiogenesis and for embryonic heart development. May regulate endothelial cell shape changes in response to blood flow, which drive vascular remodeling and establishment of normal vascular morphology during angiogenesis. May play a role in the binding of endothelial cells to integrins. Acts as a TGF-beta coreceptor and is involved in the TGF-beta/BMP signaling cascade that ultimately leads to the activation of SMAD transcription factors. Required for GDF2/BMP9 signaling through SMAD1 in endothelial cells and modulates TGFB1 signaling through SMAD3. The chain is Endoglin (Eng) from Mus musculus (Mouse).